Reading from the N-terminus, the 112-residue chain is Nucleoid-associated protein CPR_0056 (112 aa).

The span at alanine 91–glycine 100 shows a compositional bias: basic and acidic residues. The segment at alanine 91–phenylalanine 112 is disordered. The segment covering leucine 102–phenylalanine 112 has biased composition (gly residues).

The protein belongs to the YbaB/EbfC family. Homodimer.

The protein localises to the cytoplasm. Its subcellular location is the nucleoid. Binds to DNA and alters its conformation. May be involved in regulation of gene expression, nucleoid organization and DNA protection. This Clostridium perfringens (strain SM101 / Type A) protein is Nucleoid-associated protein CPR_0056.